The primary structure comprises 179 residues: Protein GrpE (179 aa).

Residues 1–45 are disordered; that stretch reads MSEEKLTQDPTAEEEQTETADQQESADVNWEQEAAHWKAQAEEHQ. Basic and acidic residues predominate over residues 33–45; it reads EAAHWKAQAEEHQ.

It belongs to the GrpE family. As to quaternary structure, homodimer.

The protein resides in the cytoplasm. Functionally, participates actively in the response to hyperosmotic and heat shock by preventing the aggregation of stress-denatured proteins, in association with DnaK and GrpE. It is the nucleotide exchange factor for DnaK and may function as a thermosensor. Unfolded proteins bind initially to DnaJ; upon interaction with the DnaJ-bound protein, DnaK hydrolyzes its bound ATP, resulting in the formation of a stable complex. GrpE releases ADP from DnaK; ATP binding to DnaK triggers the release of the substrate protein, thus completing the reaction cycle. Several rounds of ATP-dependent interactions between DnaJ, DnaK and GrpE are required for fully efficient folding. This Brevibacillus choshinensis protein is Protein GrpE.